The following is a 512-amino-acid chain: 2,3-bisphosphoglycerate-independent phosphoglycerate mutase (512 aa).

The Mn(2+) site is built by aspartate 12 and serine 62. The active-site Phosphoserine intermediate is the serine 62. Residues histidine 123, 154–155 (RD), arginine 181, arginine 187, 253–256 (RPDR), and lysine 336 each bind substrate. Aspartate 403, histidine 407, aspartate 444, histidine 445, and histidine 462 together coordinate Mn(2+).

This sequence belongs to the BPG-independent phosphoglycerate mutase family. In terms of assembly, monomer. Mn(2+) serves as cofactor.

The enzyme catalyses (2R)-2-phosphoglycerate = (2R)-3-phosphoglycerate. It functions in the pathway carbohydrate degradation; glycolysis; pyruvate from D-glyceraldehyde 3-phosphate: step 3/5. In terms of biological role, catalyzes the interconversion of 2-phosphoglycerate and 3-phosphoglycerate. The polypeptide is 2,3-bisphosphoglycerate-independent phosphoglycerate mutase (Aster yellows witches'-broom phytoplasma (strain AYWB)).